The following is a 458-amino-acid chain: Macrophage scavenger receptor types I and II (458 aa).

Topologically, residues 1–55 (MTKEMTENQRLCPHEQEDADCSSESVKFDARSMTASLPHSTKNGPSLQEKLKSFK) are cytoplasmic. A phosphoserine mark is found at serine 32 and serine 36. A helical; Signal-anchor for type II membrane protein membrane pass occupies residues 56 to 78 (AALIALYLLVFAVLIPVVGIVTA). A spacer region spans residues 79-114 (QLLNWEMKNCLVCSLNTSDTSQGPMEKENTSKVEMR). The Extracellular portion of the chain corresponds to 79 to 458 (QLLNWEMKNC…SEDAGVTCTS (380 aa)). N-linked (GlcNAc...) asparagine glycans are attached at residues asparagine 94, asparagine 107, asparagine 147, asparagine 188, asparagine 253, and asparagine 271. Residues 209–259 (TAKQQEDISKLEERVYKVSAEVQSVKEEQAHVEQEVKQEVRVLNNITNDLR) adopt a coiled-coil conformation. The disordered stretch occupies residues 272–357 (ITFIQGPPGP…VGGSTPLKTV (86 aa)). The region spanning 277–350 (GPPGPQGEKG…QKGEKGSVGG (74 aa)) is the Collagen-like domain. Gly residues predominate over residues 316 to 325 (GFPGGRGNPG). The span at 326–339 (APGKPGRSGSPGPK) shows a compositional bias: low complexity. One can recognise an SRCR domain in the interval 357-457 (VRLVGGSGAH…HSEDAGVTCT (101 aa)). Disulfide bonds link cysteine 382–cysteine 446, cysteine 395–cysteine 456, and cysteine 426–cysteine 436.

Homotrimer. Interacts with MYO18A.

The protein localises to the membrane. Membrane glycoproteins implicated in the pathologic deposition of cholesterol in arterial walls during atherogenesis. Two types of receptor subunits exist. These receptors mediate the endocytosis of a diverse group of macromolecules, including modified low density lipoproteins (LDL). The protein is Macrophage scavenger receptor types I and II (Msr1) of Mus musculus (Mouse).